A 344-amino-acid polypeptide reads, in one-letter code: Type II methyltransferase M.FnuDI (344 aa).

The region spanning 1-330 (MKLLSLFSGA…KRIKETLTDK (330 aa)) is the SAM-dependent MTase C5-type domain. Cys71 is an active-site residue.

The protein belongs to the class I-like SAM-binding methyltransferase superfamily. C5-methyltransferase family.

The enzyme catalyses a 2'-deoxycytidine in DNA + S-adenosyl-L-methionine = a 5-methyl-2'-deoxycytidine in DNA + S-adenosyl-L-homocysteine + H(+). Functionally, a methylase, recognizes the double-stranded sequence 5'-GGCC-3', methylates C-? on both strands, and protects the DNA from cleavage by the FnuDI endonuclease. In Fusobacterium nucleatum, this protein is Type II methyltransferase M.FnuDI (fnuDIM).